An 89-amino-acid chain; its full sequence is Putative defensin-like protein 40 (89 aa).

A signal peptide spans 1–26; the sequence is MAGIANGVGLLISFMLICGGMPKGHA. 4 disulfides stabilise this stretch: C33/C88, C46/C69, C55/C81, and C59/C83.

This sequence belongs to the DEFL family.

Its subcellular location is the secreted. The sequence is that of Putative defensin-like protein 40 from Arabidopsis thaliana (Mouse-ear cress).